Consider the following 157-residue polypeptide: Endoribonuclease YbeY (157 aa).

His118, His122, and His128 together coordinate Zn(2+).

It belongs to the endoribonuclease YbeY family. The cofactor is Zn(2+).

It localises to the cytoplasm. In terms of biological role, single strand-specific metallo-endoribonuclease involved in late-stage 70S ribosome quality control and in maturation of the 3' terminus of the 16S rRNA. The sequence is that of Endoribonuclease YbeY from Bordetella parapertussis (strain 12822 / ATCC BAA-587 / NCTC 13253).